A 271-amino-acid chain; its full sequence is Urease accessory protein UreD (271 aa).

It belongs to the UreD family. As to quaternary structure, ureD, UreF and UreG form a complex that acts as a GTP-hydrolysis-dependent molecular chaperone, activating the urease apoprotein by helping to assemble the nickel containing metallocenter of UreC. The UreE protein probably delivers the nickel.

Its subcellular location is the cytoplasm. Its function is as follows. Required for maturation of urease via the functional incorporation of the urease nickel metallocenter. This chain is Urease accessory protein UreD, found in Azorhizobium caulinodans (strain ATCC 43989 / DSM 5975 / JCM 20966 / LMG 6465 / NBRC 14845 / NCIMB 13405 / ORS 571).